Reading from the N-terminus, the 243-residue chain is tRNA (guanine-N(1)-)-methyltransferase (243 aa).

S-adenosyl-L-methionine is bound by residues Gly108 and 127–132; that span reads LGDFVL.

This sequence belongs to the RNA methyltransferase TrmD family. As to quaternary structure, homodimer.

It is found in the cytoplasm. The enzyme catalyses guanosine(37) in tRNA + S-adenosyl-L-methionine = N(1)-methylguanosine(37) in tRNA + S-adenosyl-L-homocysteine + H(+). Functionally, specifically methylates guanosine-37 in various tRNAs. This chain is tRNA (guanine-N(1)-)-methyltransferase, found in Streptococcus equi subsp. equi (strain 4047).